Reading from the N-terminus, the 159-residue chain is Ribosome maturation factor RimM (159 aa).

Positions 86 to 159 (SDAFHLPKLI…IHIETIEGLI (74 aa)) constitute a PRC barrel domain.

This sequence belongs to the RimM family. Binds ribosomal protein uS19.

It localises to the cytoplasm. In terms of biological role, an accessory protein needed during the final step in the assembly of 30S ribosomal subunit, possibly for assembly of the head region. Essential for efficient processing of 16S rRNA. May be needed both before and after RbfA during the maturation of 16S rRNA. It has affinity for free ribosomal 30S subunits but not for 70S ribosomes. The chain is Ribosome maturation factor RimM from Acholeplasma laidlawii (strain PG-8A).